Consider the following 172-residue polypeptide: NADH-quinone oxidoreductase subunit B (172 aa).

4 residues coordinate [4Fe-4S] cluster: cysteine 46, cysteine 47, cysteine 111, and cysteine 141.

It belongs to the complex I 20 kDa subunit family. NDH-1 is composed of 14 different subunits. Subunits NuoB, C, D, E, F, and G constitute the peripheral sector of the complex. It depends on [4Fe-4S] cluster as a cofactor.

Its subcellular location is the cell membrane. It carries out the reaction a quinone + NADH + 5 H(+)(in) = a quinol + NAD(+) + 4 H(+)(out). Functionally, NDH-1 shuttles electrons from NADH, via FMN and iron-sulfur (Fe-S) centers, to quinones in the respiratory chain. The immediate electron acceptor for the enzyme in this species is believed to be a menaquinone. Couples the redox reaction to proton translocation (for every two electrons transferred, four hydrogen ions are translocated across the cytoplasmic membrane), and thus conserves the redox energy in a proton gradient. The protein is NADH-quinone oxidoreductase subunit B of Bacillus anthracis (strain A0248).